The chain runs to 102 residues: MPEICPICGLPKDLCVCEEIAKEEQKIKVYVTKRRFGKLMTVVDGFDADLIDVKDLAKKLKDICACGGTVKKDSIELQGDHRKKAEEILIKMGFSKDMIDVR.

It belongs to the SUI1 family.

This is Protein translation factor SUI1 homolog from Methanococcus vannielii.